The following is a 450-amino-acid chain: Bifunctional protein GlmU (450 aa).

The interval 1–226 is pyrophosphorylase; it reads MLAVAVLAAG…ADEVNGINNR (226 aa). UDP-N-acetyl-alpha-D-glucosamine-binding positions include 7–10, K21, Q73, and 78–79; these read LAAG and GT. Residue D103 coordinates Mg(2+). UDP-N-acetyl-alpha-D-glucosamine-binding residues include G140, E155, N170, and N224. N224 contributes to the Mg(2+) binding site. The tract at residues 227-247 is linker; sequence RQLAQCEALLQQRLRHHWMDE. An N-acetyltransferase region spans residues 248–450; it reads GVTFIDPESC…TKEGWAERKV (203 aa). R329 and K347 together coordinate UDP-N-acetyl-alpha-D-glucosamine. The active-site Proton acceptor is H359. UDP-N-acetyl-alpha-D-glucosamine-binding residues include Y362 and N373. Residues A376, 382–383, A419, and R436 each bind acetyl-CoA; that span reads NY.

The protein in the N-terminal section; belongs to the N-acetylglucosamine-1-phosphate uridyltransferase family. This sequence in the C-terminal section; belongs to the transferase hexapeptide repeat family. Homotrimer. It depends on Mg(2+) as a cofactor.

Its subcellular location is the cytoplasm. It carries out the reaction alpha-D-glucosamine 1-phosphate + acetyl-CoA = N-acetyl-alpha-D-glucosamine 1-phosphate + CoA + H(+). The catalysed reaction is N-acetyl-alpha-D-glucosamine 1-phosphate + UTP + H(+) = UDP-N-acetyl-alpha-D-glucosamine + diphosphate. The protein operates within nucleotide-sugar biosynthesis; UDP-N-acetyl-alpha-D-glucosamine biosynthesis; N-acetyl-alpha-D-glucosamine 1-phosphate from alpha-D-glucosamine 6-phosphate (route II): step 2/2. It participates in nucleotide-sugar biosynthesis; UDP-N-acetyl-alpha-D-glucosamine biosynthesis; UDP-N-acetyl-alpha-D-glucosamine from N-acetyl-alpha-D-glucosamine 1-phosphate: step 1/1. Its pathway is bacterial outer membrane biogenesis; LPS lipid A biosynthesis. Catalyzes the last two sequential reactions in the de novo biosynthetic pathway for UDP-N-acetylglucosamine (UDP-GlcNAc). The C-terminal domain catalyzes the transfer of acetyl group from acetyl coenzyme A to glucosamine-1-phosphate (GlcN-1-P) to produce N-acetylglucosamine-1-phosphate (GlcNAc-1-P), which is converted into UDP-GlcNAc by the transfer of uridine 5-monophosphate (from uridine 5-triphosphate), a reaction catalyzed by the N-terminal domain. The sequence is that of Bifunctional protein GlmU from Synechococcus sp. (strain CC9605).